Here is a 256-residue protein sequence, read N- to C-terminus: Small ribosomal subunit protein eS1 (256 aa).

Over residues 1 to 18 (MAVGKNKRLSKGKKGLKK) the composition is skewed to basic residues. A disordered region spans residues 1–20 (MAVGKNKRLSKGKKGLKKKA). An N-acetylalanine; partial modification is found at A2.

It belongs to the eukaryotic ribosomal protein eS1 family. In terms of assembly, component of the small ribosomal subunit. Mature ribosomes consist of a small (40S) and a large (60S) subunit. The 40S subunit contains about 33 different proteins and 1 molecule of RNA (18S). The 60S subunit contains about 49 different proteins and 3 molecules of RNA (25S, 5.8S and 5S).

It is found in the cytoplasm. The chain is Small ribosomal subunit protein eS1 from Podospora anserina (strain S / ATCC MYA-4624 / DSM 980 / FGSC 10383) (Pleurage anserina).